Consider the following 93-residue polypeptide: MSITPAKKSELISEYKVKDGDTGSAYVQCAILSERIRNLTEHLKIHKKDFHCRRGLMVLVCKRRKGLQYVRNKYGNDAYLDLVKRLGIRDVFH.

This sequence belongs to the universal ribosomal protein uS15 family. As to quaternary structure, part of the 30S ribosomal subunit. Forms a bridge to the 50S subunit in the 70S ribosome, contacting the 23S rRNA.

Its function is as follows. One of the primary rRNA binding proteins, it binds directly to 16S rRNA where it helps nucleate assembly of the platform of the 30S subunit by binding and bridging several RNA helices of the 16S rRNA. Forms an intersubunit bridge (bridge B4) with the 23S rRNA of the 50S subunit in the ribosome. This is Small ribosomal subunit protein uS15 from Anaplasma marginale (strain St. Maries).